Consider the following 132-residue polypeptide: Antileukoproteinase (132 aa).

A signal peptide spans 1 to 24 (MKFSGLFPFLLLALGTLALWAVEG). The 49-residue stretch at 28–76 (EALKAGACPPRKSAQCFGNEKPRCSSDWQCPHKKKCCLDTCGTECLDPV) folds into the WAP 1 domain. Cystine bridges form between Cys35-Cys64, Cys43-Cys68, Cys51-Cys63, and Cys57-Cys72. Asn77 carries an N-linked (GlcNAc...) asparagine glycan. The WAP 2 domain occupies 82–130 (VKKKPGTCPVIHGQCLMLKPLNHCETDDQCIGALKCCKAMCGKVCLSPV). Cystine bridges form between Cys89/Cys118, Cys96/Cys122, Cys105/Cys117, and Cys111/Cys126.

As to quaternary structure, interacts with GRN; interaction protects progranulin from proteolysis. Detected in bronchoalveolar fluid (at protein level). Detected in large and small intestine, trachea, skin, lung and tongue.

The protein localises to the secreted. Acid-stable proteinase inhibitor with strong affinities for trypsin, chymotrypsin, elastase, and cathepsin G. Modulates the inflammatory and immune responses after bacterial infection, and after infection by the intracellular parasite L.major. Down-regulates responses to bacterial lipopolysaccharide (LPS). Plays a role in regulating the activation of NF-kappa-B and inflammatory responses. Has antimicrobial activity against mycobacteria, but not against salmonella. Contributes to normal resistance against infection by M.tuberculosis. Required for normal resistance to infection by L.major. Required for normal wound healing, probably by preventing tissue damage by limiting protease activity. Together with ELANE, required for normal differentiation and proliferation of bone marrow myeloid cells. This chain is Antileukoproteinase (SLPI), found in Ovis aries (Sheep).